A 65-amino-acid chain; its full sequence is Large ribosomal subunit protein bL35 (65 aa).

Basic residues-rich tracts occupy residues 1-15 (MPKM…KRFT) and 26-44 (QAFK…KRQL). A disordered region spans residues 1–65 (MPKMKTKKSA…KSVRAMMPYA (65 aa)).

The protein belongs to the bacterial ribosomal protein bL35 family.

The chain is Large ribosomal subunit protein bL35 from Cupriavidus metallidurans (strain ATCC 43123 / DSM 2839 / NBRC 102507 / CH34) (Ralstonia metallidurans).